A 314-amino-acid chain; its full sequence is Acetaldehyde dehydrogenase 2 (314 aa).

Position 15 to 18 (15 to 18 (SGNI)) interacts with NAD(+). Residue C133 is the Acyl-thioester intermediate of the active site. NAD(+)-binding positions include 164–172 (SAGPGTRAN) and N291.

This sequence belongs to the acetaldehyde dehydrogenase family.

The enzyme catalyses acetaldehyde + NAD(+) + CoA = acetyl-CoA + NADH + H(+). This is Acetaldehyde dehydrogenase 2 from Pseudomonas putida (strain ATCC 700007 / DSM 6899 / JCM 31910 / BCRC 17059 / LMG 24140 / F1).